Consider the following 85-residue polypeptide: U4-theraphotoxin-Hhn1a (85 aa).

The signal sequence occupies residues 1–22 (MKVTLIAILTCAAVLVLHTTAA). Residues 23 to 48 (EELEAESQLMEVGMPDTELEAVDEER) constitute a propeptide that is removed on maturation. Cystine bridges form between Cys-52–Cys-66, Cys-56–Cys-77, and Cys-71–Cys-82.

Belongs to the neurotoxin 12 (Hwtx-2) family. 02 (Hwtx-2) subfamily. Monomer. Expressed by the venom gland.

The protein localises to the secreted. Its function is as follows. Neurotoxin active on both insects and mammals. In Cyriopagopus hainanus (Chinese bird spider), this protein is U4-theraphotoxin-Hhn1a.